We begin with the raw amino-acid sequence, 228 residues long: Probable calcium-binding protein CML48 (228 aa).

EF-hand domains are found at residues 52-87 (ETHP…SGYD) and 121-156 (NCLA…LGCV). Positions 65, 67, 69, and 76 each coordinate Ca(2+).

In terms of biological role, potential calcium sensor. The chain is Probable calcium-binding protein CML48 (CML48) from Arabidopsis thaliana (Mouse-ear cress).